A 105-amino-acid polypeptide reads, in one-letter code: Iron-sulfur cluster assembly protein CyaY (105 aa).

This sequence belongs to the frataxin family.

Its function is as follows. Involved in iron-sulfur (Fe-S) cluster assembly. May act as a regulator of Fe-S biogenesis. The sequence is that of Iron-sulfur cluster assembly protein CyaY from Paraburkholderia phymatum (strain DSM 17167 / CIP 108236 / LMG 21445 / STM815) (Burkholderia phymatum).